We begin with the raw amino-acid sequence, 128 residues long: Small ribosomal subunit protein uS11 (128 aa).

This sequence belongs to the universal ribosomal protein uS11 family. Part of the 30S ribosomal subunit. Interacts with proteins S7 and S18. Binds to IF-3.

Located on the platform of the 30S subunit, it bridges several disparate RNA helices of the 16S rRNA. Forms part of the Shine-Dalgarno cleft in the 70S ribosome. This is Small ribosomal subunit protein uS11 from Chloroherpeton thalassium (strain ATCC 35110 / GB-78).